The sequence spans 194 residues: IMP cyclohydrolase (194 aa).

It belongs to the archaeal IMP cyclohydrolase family.

It carries out the reaction IMP + H2O = 5-formamido-1-(5-phospho-D-ribosyl)imidazole-4-carboxamide. The protein operates within purine metabolism; IMP biosynthesis via de novo pathway; IMP from 5-formamido-1-(5-phospho-D-ribosyl)imidazole-4-carboxamide: step 1/1. Catalyzes the cyclization of 5-formylamidoimidazole-4-carboxamide ribonucleotide to IMP. The sequence is that of IMP cyclohydrolase from Halobacterium salinarum (strain ATCC 29341 / DSM 671 / R1).